Here is a 442-residue protein sequence, read N- to C-terminus: ATP-dependent RNA helicase SUB2 (442 aa).

The short motif at 59 to 87 is the Q motif element; the sequence is TGFRDFLLKGELLRAITDCGFEHPSEVQQ. The 176-residue stretch at 90-265 folds into the Helicase ATP-binding domain; the sequence is IPTAILNVDV…KKFMRNPLEV (176 aa). 103–110 provides a ligand contact to ATP; that stretch reads AKSGLGKT. A DECD box motif is present at residues 212-215; that stretch reads DECD. In terms of domain architecture, Helicase C-terminal spans 293-438; sequence KLNELLDSLE…EYPQGGVDSS (146 aa).

Belongs to the DEAD box helicase family. DECD subfamily.

It is found in the nucleus. The enzyme catalyses ATP + H2O = ADP + phosphate + H(+). Functionally, ATP-binding RNA helicase involved in transcription elongation and required for the export of mRNA out of the nucleus. SUB2 also plays a role in pre-mRNA splicing and spliceosome assembly. May be involved in rDNA and telomeric silencing, and maintenance of genome integrity. The sequence is that of ATP-dependent RNA helicase SUB2 (SUB2) from Ajellomyces capsulatus (strain NAm1 / WU24) (Darling's disease fungus).